The sequence spans 166 residues: CDP-archaeol synthase (166 aa).

4 consecutive transmembrane segments (helical) span residues 42 to 62, 73 to 93, 103 to 123, and 128 to 148; these read LVLG…VQDA, VLSV…KSFV, AAWP…LLLI, and FAAV…TPLL.

The protein belongs to the CDP-archaeol synthase family. The cofactor is Mg(2+).

Its subcellular location is the cell membrane. It catalyses the reaction 2,3-bis-O-(geranylgeranyl)-sn-glycerol 1-phosphate + CTP + H(+) = CDP-2,3-bis-O-(geranylgeranyl)-sn-glycerol + diphosphate. Its pathway is membrane lipid metabolism; glycerophospholipid metabolism. Catalyzes the formation of CDP-2,3-bis-(O-geranylgeranyl)-sn-glycerol (CDP-archaeol) from 2,3-bis-(O-geranylgeranyl)-sn-glycerol 1-phosphate (DGGGP) and CTP. This reaction is the third ether-bond-formation step in the biosynthesis of archaeal membrane lipids. This chain is CDP-archaeol synthase, found in Methanosphaerula palustris (strain ATCC BAA-1556 / DSM 19958 / E1-9c).